A 135-amino-acid chain; its full sequence is Transcriptional activator protein (135 aa).

The Nuclear localization signal signature appears at 17-32 (KVQHRAAKRKRIRRKR). A zinc finger lies at 37 to 54 (CGCSYYVHINCHNHGFTH). Residues 77 to 115 (LFQDHSTRQQTVRNEPGHNNRPDTVQPQPEESVGTTSML) form a disordered region. Polar residues predominate over residues 98–114 (PDTVQPQPEESVGTTSM). Residues 120 to 135 (GLDDLTASDLAFLEGI) are transactivation.

The protein belongs to the geminiviridae transcriptional activator protein family. As to quaternary structure, monomer. Homodimer. Homooligomer. Self-interaction correlates with nuclear localization and efficient activation of transcription. Monomers suppress local silencing by interacting with and inactivating host adenosine kinase 2 (ADK2) in the cytoplasm. Interacts with and inhibits host SNF1 kinase. Binds to ssDNA. In terms of processing, phosphorylated.

It localises to the host nucleus. Its subcellular location is the host cytoplasm. Functionally, strong activator of the late viral genes promoters. Enhances the expression of the capsid protein and nuclear shuttle protein. Acts as a suppressor of RNA-mediated gene silencing, also known as post-transcriptional gene silencing (PTGS), a mechanism of plant viral defense that limits the accumulation of viral RNAs. Suppresses the host RNA silencing by inhibiting adenosine kinase 2 (ADK2), a kinase involved in a general methylation pathway. Also suppresses the host basal defense by interacting with and inhibiting SNF1 kinase, a key regulator of cell metabolism implicated in innate antiviral defense. Determines pathogenicity. This Indian cassava mosaic virus (ICMV) protein is Transcriptional activator protein.